Here is a 167-residue protein sequence, read N- to C-terminus: Ureidoglycolate lyase (167 aa).

This sequence belongs to the ureidoglycolate lyase family. As to quaternary structure, homodimer. Ni(2+) is required as a cofactor.

The catalysed reaction is (S)-ureidoglycolate = urea + glyoxylate. Its pathway is nitrogen metabolism; (S)-allantoin degradation. Functionally, catalyzes the catabolism of the allantoin degradation intermediate (S)-ureidoglycolate, generating urea and glyoxylate. Involved in the utilization of allantoin as nitrogen source. This Pseudomonas entomophila (strain L48) protein is Ureidoglycolate lyase.